The following is a 295-amino-acid chain: Iodotyrosine deiodinase (295 aa).

Residues 3-23 (VFSSLTPVFVAVLCVIIGFLF) traverse the membrane as a helical segment. A disordered region spans residues 29-81 (KESRSKQKPSDQTARPWVDEDLQDDTEISTKDNEENNEDWMDTTDEENLPHVP). The segment covering 63–75 (ENNEDWMDTTDEE) has biased composition (acidic residues). Residues 106-110 (RRSVR), Ser-134, and 134-135 (SG) contribute to the FMN site. 4 residues coordinate 3-iodo-L-tyrosine: Ala-136, Glu-163, Tyr-167, and Lys-188. Residues 243-245 (TTT) and Arg-285 each bind FMN.

Belongs to the nitroreductase family. The cofactor is FMN.

It is found in the membrane. It catalyses the reaction 2 iodide + L-tyrosine + 2 NADP(+) = 3,5-diiodo-L-tyrosine + 2 NADPH + H(+). The catalysed reaction is iodide + L-tyrosine + NADP(+) = 3-iodo-L-tyrosine + NADPH. The enzyme catalyses 3-iodo-L-tyrosine + iodide + NADP(+) = 3,5-diiodo-L-tyrosine + NADPH + H(+). It carries out the reaction L-tyrosine + chloride + NADP(+) = 3-chloro-L-tyrosine + NADPH. It catalyses the reaction bromide + L-tyrosine + NADP(+) = 3-bromo-L-tyrosine + NADPH. In terms of biological role, catalyzes the dehalogenation of halotyrosines such as 3,5-diiodo-L-tyrosine. Likely to also catalyze the dehalogenation of other halotyrosines such as 3-bromo-L-tyrosine, 3-chloro-L-tyrosine and 3-iodo-L-tyrosine. This chain is Iodotyrosine deiodinase (iyd), found in Danio rerio (Zebrafish).